Here is a 302-residue protein sequence, read N- to C-terminus: Elongation factor Ts (302 aa).

Positions 80 to 83 (TDFV) are involved in Mg(2+) ion dislocation from EF-Tu.

It belongs to the EF-Ts family.

The protein localises to the cytoplasm. In terms of biological role, associates with the EF-Tu.GDP complex and induces the exchange of GDP to GTP. It remains bound to the aminoacyl-tRNA.EF-Tu.GTP complex up to the GTP hydrolysis stage on the ribosome. The chain is Elongation factor Ts from Methylibium petroleiphilum (strain ATCC BAA-1232 / LMG 22953 / PM1).